The chain runs to 659 residues: MIRMGGRKMNPNNRSEYDTIKVTPNSELPTNHNQYPLADNPNSTLEELNYKEFLRMTADNSTEVLDSSTVKDAVGTGISVVGQILGVVGVPFAGALTSFYQSFLNAIWPSDADPWKAFMAQVEVLIDKKIEEYAKSKALAELQGLQNNFEDYVNALDSWKKAPVNLRSRRSQDRIRELFSQAESHFRNSMPSFAVSKFEVLFLPTYAQAANTHLLLLKDAQVFGEEWGYSSEDIAEFYQRQLKLTQQYTDHCVNWYNVGLNSLRGSTYDAWVKFNRFRREMTLTVLDLIVLFPFYDVRLYSKGVKTELTRDIFTDPIFTLNALQEYGPTFSSIENSIRKPHLFDYLRGIEFHTRLRPGYSGKDSFNYWSGNYVETRPSIGSNDTITSPFYGDKSIEPIQKLSFDGQKVYRTIANTDIAAFPDGKIYFGVTKVDFSQYDDQKNETSTQTYDSKRYNGYLGAQDSIDQLPPETTDEPLEKAYSHQLNYAECFLMQDRRGTIPFFTWTHRSVDFFNTIDAEKITQLPVVKAYALSSGASIIEGPGFTGGNLLFLKESSNSIAKFKVTLNSAALLQRYRVRIRYASTTNLRLFVQNSNNDFLVIYINKTMNIDGDLTYQTFDFATSNSNMGFSGDTNDFIIGAESFVSNEKIYIDKIEFIPVQ.

The disordered stretch occupies residues 1-41; that stretch reads MIRMGGRKMNPNNRSEYDTIKVTPNSELPTNHNQYPLADNP. The span at 22-41 shows a compositional bias: polar residues; sequence VTPNSELPTNHNQYPLADNP.

It belongs to the delta endotoxin family.

In terms of biological role, promotes colloidosmotic lysis by binding to the midgut epithelial cells of Coleoptera. The sequence is that of Pesticidal crystal protein Cry3Ba (cry3Ba) from Bacillus thuringiensis subsp. tolworthi.